We begin with the raw amino-acid sequence, 304 residues long: Probable alpha-L-glutamate ligase 2 (304 aa).

In terms of domain architecture, ATP-grasp spans 107-290; it reads HQLLARKGVG…IAGAIIDYIV (184 aa). ATP is bound by residues K144, 181-182, D190, and 214-216; these read EF and RSN. Mg(2+) contacts are provided by D251, E263, and N265. Mn(2+) is bound by residues D251, E263, and N265.

Belongs to the RimK family. It depends on Mg(2+) as a cofactor. Mn(2+) is required as a cofactor.

The chain is Probable alpha-L-glutamate ligase 2 from Hahella chejuensis (strain KCTC 2396).